The sequence spans 445 residues: Guanosine nucleotide diphosphate dissociation inhibitor At5g09550 (445 aa).

It belongs to the Rab GDI family.

Its function is as follows. Regulates the GDP/GTP exchange reaction of most RAB proteins by inhibiting the dissociation of GDP from them, and the subsequent binding of GTP. In Arabidopsis thaliana (Mouse-ear cress), this protein is Guanosine nucleotide diphosphate dissociation inhibitor At5g09550.